A 92-amino-acid polypeptide reads, in one-letter code: Long neurotoxin 77 (92 aa).

The first 21 residues, 1 to 21, serve as a signal peptide directing secretion; sequence MKTLLLTLVVVTIVCLDLGDS. Disulfide bonds link Cys-24–Cys-41, Cys-34–Cys-62, Cys-47–Cys-51, Cys-66–Cys-77, and Cys-78–Cys-83.

Belongs to the three-finger toxin family. Long-chain subfamily. Type II alpha-neurotoxin sub-subfamily. In terms of tissue distribution, expressed by the venom gland.

It localises to the secreted. Binds with high affinity to muscular (alpha-1/CHRNA1) and neuronal (alpha-7/CHRNA7) nicotinic acetylcholine receptor (nAChR) and inhibits acetylcholine from binding to the receptor, thereby impairing neuromuscular and neuronal transmission. The chain is Long neurotoxin 77 from Drysdalia coronoides (White-lipped snake).